Reading from the N-terminus, the 480-residue chain is Cysteine--tRNA ligase (480 aa).

Cys-29 is a binding site for Zn(2+). The 'HIGH' region signature appears at 31-41 (ITVYDYCHLGH). Zn(2+) contacts are provided by Cys-215, His-240, and Glu-244. The short motif at 272-276 (KMSKS) is the 'KMSKS' region element. Lys-275 serves as a coordination point for ATP.

Belongs to the class-I aminoacyl-tRNA synthetase family. In terms of assembly, monomer. Zn(2+) serves as cofactor.

Its subcellular location is the cytoplasm. It carries out the reaction tRNA(Cys) + L-cysteine + ATP = L-cysteinyl-tRNA(Cys) + AMP + diphosphate. The chain is Cysteine--tRNA ligase from Microcystis aeruginosa (strain NIES-843 / IAM M-2473).